A 150-amino-acid chain; its full sequence is MKYQQLENLESGWKWKYLVKKHREGELITRYIEASAAQEAVDVLLSLENEPVLVNGWIDKHMNPELVNRMKQTIRARRKRHFNAEHQHTRKKSIDLEFIVWQRLAGLAQRRGKTLSETIVQLIEDAENKEKYANKMSSLKQDLQALLGKE.

It belongs to the MatP family. Homodimer.

The protein localises to the cytoplasm. Its function is as follows. Required for spatial organization of the terminus region of the chromosome (Ter macrodomain) during the cell cycle. Prevents early segregation of duplicated Ter macrodomains during cell division. Binds specifically to matS, which is a 13 bp signature motif repeated within the Ter macrodomain. This is Macrodomain Ter protein from Shigella dysenteriae serotype 1 (strain Sd197).